We begin with the raw amino-acid sequence, 222 residues long: MNELKHLAVVMDGNRRWARAKGFLAKLGYSQGVKTMQKLMEVCMEENISNLSLFAFSTENWKRPKDEIDFIFELLDRCLDEALEKFEKNNVRLRAIGDLSRLEDKVREKITLVEEKTKHCDALCVNLAISYGARDEIIRAAKRVIEKKLELNEENLTQNLDLPLDVDLMLRVGNAKRLSNFLLWQCSYAEIYFSETLFPSLTKREFKRIIKEFRNRERTFGK.

Asp12 is an active-site residue. Residue Asp12 participates in Mg(2+) binding. Substrate contacts are provided by residues 13–16 (GNRR), Trp17, and 57–59 (STE). Residue Asn60 is the Proton acceptor of the active site. Substrate-binding positions include Trp61, Arg63, Arg171, and 177–179 (RLS). A Mg(2+)-binding site is contributed by Glu190.

The protein belongs to the UPP synthase family. As to quaternary structure, homodimer. The cofactor is Mg(2+).

In terms of biological role, catalyzes the condensation of isopentenyl diphosphate (IPP) with allylic pyrophosphates generating different type of terpenoids. In Campylobacter jejuni subsp. jejuni serotype O:2 (strain ATCC 700819 / NCTC 11168), this protein is Isoprenyl transferase (uppS).